The primary structure comprises 65 residues: Translational regulator CsrA (65 aa).

The protein belongs to the CsrA/RsmA family. Homodimer; the beta-strands of each monomer intercalate to form a hydrophobic core, while the alpha-helices form wings that extend away from the core.

It is found in the cytoplasm. Its function is as follows. A translational regulator that binds mRNA to regulate translation initiation and/or mRNA stability. Usually binds in the 5'-UTR at or near the Shine-Dalgarno sequence preventing ribosome-binding, thus repressing translation. Its main target seems to be the major flagellin gene, while its function is anatagonized by FliW. This Bordetella petrii (strain ATCC BAA-461 / DSM 12804 / CCUG 43448) protein is Translational regulator CsrA.